The following is a 428-amino-acid chain: Tyrosine--tRNA ligase (428 aa).

Y37 is a binding site for L-tyrosine. Positions 42–51 match the 'HIGH' region motif; sequence PTGSSLHAGH. L-tyrosine is bound by residues Y175 and Q179. A 'KMSKS' region motif is present at residues 235–239; the sequence is KFGKS. Residue K238 participates in ATP binding. In terms of domain architecture, S4 RNA-binding spans 358 to 415; that stretch reads ATILDLLVESGLEKSKGAARRTVGEGGAYVNNQRIEDIEWSPSAEELLHGSWLVLRKG.

This sequence belongs to the class-I aminoacyl-tRNA synthetase family. TyrS type 1 subfamily. Homodimer.

It localises to the cytoplasm. The catalysed reaction is tRNA(Tyr) + L-tyrosine + ATP = L-tyrosyl-tRNA(Tyr) + AMP + diphosphate + H(+). Its function is as follows. Catalyzes the attachment of tyrosine to tRNA(Tyr) in a two-step reaction: tyrosine is first activated by ATP to form Tyr-AMP and then transferred to the acceptor end of tRNA(Tyr). This chain is Tyrosine--tRNA ligase, found in Corynebacterium jeikeium (strain K411).